Consider the following 256-residue polypeptide: 4-hydroxy-tetrahydrodipicolinate reductase (256 aa).

8–13 (GATGRV) serves as a coordination point for NAD(+). Residue lysine 36 coordinates NADP(+). NAD(+) contacts are provided by residues 89–91 (GTT) and 113–116 (ATNM). The active-site Proton donor/acceptor is histidine 145. Histidine 146 contacts (S)-2,3,4,5-tetrahydrodipicolinate. Catalysis depends on lysine 149, which acts as the Proton donor. A (S)-2,3,4,5-tetrahydrodipicolinate-binding site is contributed by 155 to 156 (GT).

It belongs to the DapB family.

Its subcellular location is the cytoplasm. The catalysed reaction is (S)-2,3,4,5-tetrahydrodipicolinate + NAD(+) + H2O = (2S,4S)-4-hydroxy-2,3,4,5-tetrahydrodipicolinate + NADH + H(+). It carries out the reaction (S)-2,3,4,5-tetrahydrodipicolinate + NADP(+) + H2O = (2S,4S)-4-hydroxy-2,3,4,5-tetrahydrodipicolinate + NADPH + H(+). Its pathway is amino-acid biosynthesis; L-lysine biosynthesis via DAP pathway; (S)-tetrahydrodipicolinate from L-aspartate: step 4/4. Its function is as follows. Catalyzes the conversion of 4-hydroxy-tetrahydrodipicolinate (HTPA) to tetrahydrodipicolinate. This chain is 4-hydroxy-tetrahydrodipicolinate reductase, found in Wolinella succinogenes (strain ATCC 29543 / DSM 1740 / CCUG 13145 / JCM 31913 / LMG 7466 / NCTC 11488 / FDC 602W) (Vibrio succinogenes).